Reading from the N-terminus, the 445-residue chain is Methionine aminopeptidase 2 (445 aa).

Residues 1-80 (MAAQVASGVG…TSKVQTEPPR (80 aa)) are disordered. Over residues 57-71 (AKKKKKKTKKKKKGT) the composition is skewed to basic residues. Histidine 195 contacts substrate. A divalent metal cation is bound by residues aspartate 215, aspartate 226, and histidine 295. Residue histidine 303 participates in substrate binding. Residues glutamate 331 and glutamate 426 each coordinate a divalent metal cation.

The protein belongs to the peptidase M24A family. Methionine aminopeptidase eukaryotic type 2 subfamily. Requires Co(2+) as cofactor. Zn(2+) is required as a cofactor. Mn(2+) serves as cofactor. It depends on Fe(2+) as a cofactor.

Its subcellular location is the cytoplasm. The enzyme catalyses Release of N-terminal amino acids, preferentially methionine, from peptides and arylamides.. Functionally, cotranslationally removes the N-terminal methionine from nascent proteins. The N-terminal methionine is often cleaved when the second residue in the primary sequence is small and uncharged (Met-Ala-, Cys, Gly, Pro, Ser, Thr, or Val). This chain is Methionine aminopeptidase 2, found in Paracoccidioides brasiliensis (strain Pb18).